We begin with the raw amino-acid sequence, 528 residues long: Bifunctional pantoate ligase/cytidylate kinase (528 aa).

The tract at residues 1-293 (MRLFTTIAGL…IGSCRLIDNI (293 aa)) is pantoate--beta-alanine ligase. 34–41 (MGALHKGH) lines the ATP pocket. Histidine 41 acts as the Proton donor in catalysis. Residue glutamine 65 participates in (R)-pantoate binding. Position 65 (glutamine 65) interacts with beta-alanine. An ATP-binding site is contributed by 160–163 (GQKD). Residue glutamine 166 participates in (R)-pantoate binding. ATP is bound by residues isoleucine 189 and 197–200 (ISSR). A cytidylate kinase region spans residues 294 to 528 (LLRNRKPIIA…YGKSSVNNII (235 aa)).

It in the N-terminal section; belongs to the pantothenate synthetase family. This sequence in the C-terminal section; belongs to the cytidylate kinase family. Type 1 subfamily.

It is found in the cytoplasm. It catalyses the reaction (R)-pantoate + beta-alanine + ATP = (R)-pantothenate + AMP + diphosphate + H(+). The catalysed reaction is CMP + ATP = CDP + ADP. It carries out the reaction dCMP + ATP = dCDP + ADP. It participates in cofactor biosynthesis; (R)-pantothenate biosynthesis; (R)-pantothenate from (R)-pantoate and beta-alanine: step 1/1. In terms of biological role, catalyzes the condensation of pantoate with beta-alanine in an ATP-dependent reaction via a pantoyl-adenylate intermediate. Catalyzes the transfer of a phosphate group from ATP to either CMP or dCMP to form CDP or dCDP and ADP, respectively. The protein is Bifunctional pantoate ligase/cytidylate kinase of Trichodesmium erythraeum (strain IMS101).